An 892-amino-acid polypeptide reads, in one-letter code: Protein argonaute 11 (892 aa).

Residues 1 to 17 are compositionally biased toward gly residues; that stretch reads MSSRGGGVGGRRGGPGG. Disordered stretches follow at residues 1 to 68 and 86 to 117; these read MSSR…ALQP and MEAREGASSSSSASAPAVGEVEPPSRAVGALP. Over residues 86 to 107 the composition is skewed to low complexity; that stretch reads MEAREGASSSSSASAPAVGEVE. The 115-residue stretch at 248–362 folds into the PAZ domain; that stretch reads SLKQFLAGTY…LPMEVCRIVK (115 aa). The Piwi domain occupies 541-848; sequence LLVIVLPDAN…AASRARHYLE (308 aa). The disordered stretch occupies residues 850-876; it reads GSLPDHGSSSASAAGGSRRNDRGVPVK. A compositionally biased stretch (low complexity) spans 856-866; that stretch reads GSSSASAAGGS. The span at 867 to 876 shows a compositional bias: basic and acidic residues; it reads RRNDRGVPVK.

It belongs to the argonaute family. Ago subfamily.

Its function is as follows. Probably involved in the RNA silencing pathway. May bind to short RNAs such as microRNAs (miRNAs) or short interfering RNAs (siRNAs), and represses the translation of mRNAs which are complementary to them. The sequence is that of Protein argonaute 11 (AGO11) from Oryza sativa subsp. japonica (Rice).